The following is a 257-amino-acid chain: MLAKRIVPCLDVKDGCVVKGVQFRNHEIVGDIVPLAARYAAEGADELVFYDITASAHDRVVDKSWVSRVAEQIDIPFCVAGGIKTIGQARELLAFGADKISVNSPALSDPSLISRLQDEFGRQCIVIGIDSFYDAASDSYKVKQFTGDEAATKETAWYTQDWVEEVQKRGCGEIVLNVMNQDGVRGGYDIKQLSLVRQLCDVPLIASGGAGTMAHFRDVFIEAKVDAALAASVFHKAIINIGELKQYLAAEGIAIRL.

Catalysis depends on residues aspartate 11 and aspartate 130.

The protein belongs to the HisA/HisF family. In terms of assembly, heterodimer of HisH and HisF.

It localises to the cytoplasm. The enzyme catalyses 5-[(5-phospho-1-deoxy-D-ribulos-1-ylimino)methylamino]-1-(5-phospho-beta-D-ribosyl)imidazole-4-carboxamide + L-glutamine = D-erythro-1-(imidazol-4-yl)glycerol 3-phosphate + 5-amino-1-(5-phospho-beta-D-ribosyl)imidazole-4-carboxamide + L-glutamate + H(+). It functions in the pathway amino-acid biosynthesis; L-histidine biosynthesis; L-histidine from 5-phospho-alpha-D-ribose 1-diphosphate: step 5/9. In terms of biological role, IGPS catalyzes the conversion of PRFAR and glutamine to IGP, AICAR and glutamate. The HisF subunit catalyzes the cyclization activity that produces IGP and AICAR from PRFAR using the ammonia provided by the HisH subunit. In Shewanella sp. (strain MR-7), this protein is Imidazole glycerol phosphate synthase subunit HisF.